Here is a 688-residue protein sequence, read N- to C-terminus: Glycine--tRNA ligase beta subunit (688 aa).

The protein belongs to the class-II aminoacyl-tRNA synthetase family. In terms of assembly, tetramer of two alpha and two beta subunits.

It is found in the cytoplasm. It carries out the reaction tRNA(Gly) + glycine + ATP = glycyl-tRNA(Gly) + AMP + diphosphate. This is Glycine--tRNA ligase beta subunit from Listeria monocytogenes serotype 4a (strain HCC23).